We begin with the raw amino-acid sequence, 564 residues long: Excitatory amino acid transporter 4 (564 aa).

Over 1–55 the chain is Cytoplasmic; sequence MSSHGNSLFLRESGQRLGRVGWLQRLQESLQQRALRTRLRLQTMTREHVLRFLRR. Ser2 is subject to Phosphoserine. A run of 3 helical transmembrane segments spans residues 56–76, 99–119, and 133–153; these read NAFILLTVSAVVIGVSLAFAL, MLQMLVLPLIVSSLVTGMASL, and VYYMVTTVIAVFIGILMVTII. 3 N-linked (GlcNAc...) asparagine glycosylation sites follow: Asn216, Asn232, and Asn239. 3 consecutive transmembrane segments (helical) span residues 262-285, 295-322, and 344-365; these read SANGINALGLVVFSVAFGLVIGGV, FFDSLNEAIMRMVGIIIWYAPVGILFLI, and LTVIVGLFLHAGGVLPLIYFLI. Residues 371 to 401 constitute an intramembrane region (discontinuously helical); that stretch reads FPFIGGVLQALITAMGTSSSSATLPITFRCL. 388–390 provides a ligand contact to L-aspartate; that stretch reads SSS. A helical membrane pass occupies residues 411-437; it reads ITRFVLPVGATVNMDGTALYEALAAIF. Na(+) is bound by residues Gly419, Thr421, and Asn423. L-aspartate contacts are provided by residues Thr427, 468–472, Asp501, and Asn508; that span reads IPQAG. The segment at residues 451–484 is an intramembrane region (discontinuously helical); it reads ITTISITATAASVGAAGIPQAGLVTMVIVLTSVG. Residues 498 to 519 form a helical membrane-spanning segment; that stretch reads WFLDRLRTMTNVLGDSIGAAVI. Residues Asn508 and Asp512 each coordinate Na(+).

It belongs to the dicarboxylate/amino acid:cation symporter (DAACS) (TC 2.A.23) family. SLC1A6 subfamily. In terms of assembly, homotrimer. In terms of tissue distribution, detected in brain, cerebellum and hippocampus.

Its subcellular location is the cell membrane. The catalysed reaction is K(+)(in) + L-glutamate(out) + 3 Na(+)(out) + H(+)(out) = K(+)(out) + L-glutamate(in) + 3 Na(+)(in) + H(+)(in). The enzyme catalyses K(+)(in) + L-aspartate(out) + 3 Na(+)(out) + H(+)(out) = K(+)(out) + L-aspartate(in) + 3 Na(+)(in) + H(+)(in). It catalyses the reaction D-aspartate(out) + K(+)(in) + 3 Na(+)(out) + H(+)(out) = D-aspartate(in) + K(+)(out) + 3 Na(+)(in) + H(+)(in). Functionally, sodium-dependent, high-affinity amino acid transporter that mediates the uptake of L-glutamate and also L-aspartate and D-aspartate. Functions as a symporter that transports one amino acid molecule together with two or three Na(+) ions and one proton, in parallel with the counter-transport of one K(+) ion. Mediates Cl(-) flux that is not coupled to amino acid transport; this avoids the accumulation of negative charges due to aspartate and Na(+) symport. Plays a redundant role in the rapid removal of released glutamate from the synaptic cleft, which is essential for terminating the postsynaptic action of glutamate. This is Excitatory amino acid transporter 4 (SLC1A6) from Canis lupus familiaris (Dog).